We begin with the raw amino-acid sequence, 307 residues long: MPIKIPDTLPAFETLVQEGVRVMTETLAIRQDIRPLQIGLLNLMPNKIKTELQMARLVGASPLQVELSLIRIGGHKAKNTSEDHLLAFYQTWEEVKHRKFDGFIITGAPIELLPYEDVTYWPEMQEILDWTETNVHSTMNVCWGAMAAVYHFHGVPKYELKEKAFGVYRHRNLKPSSIYLNGFSDNFEVPVSRWTEVRRADIEKSESLEILMESSEMGVCLVHEKRGRRLYMFNHVEYDSTSLSDEYFRDVNAGVPIKMPHNYFPHNDPALAPQNRWRSHAHLLFGNWINEIYQTTPFDVEEIGTDL.

C142 serves as the catalytic Acyl-thioester intermediate. K163 and S192 together coordinate substrate. H235 serves as the catalytic Proton acceptor. The active site involves E237. R249 serves as a coordination point for substrate.

This sequence belongs to the MetA family.

The protein localises to the cytoplasm. The catalysed reaction is L-homoserine + acetyl-CoA = O-acetyl-L-homoserine + CoA. It participates in amino-acid biosynthesis; L-methionine biosynthesis via de novo pathway; O-acetyl-L-homoserine from L-homoserine: step 1/1. Its function is as follows. Transfers an acetyl group from acetyl-CoA to L-homoserine, forming acetyl-L-homoserine. This is Homoserine O-acetyltransferase from Rhizobium johnstonii (strain DSM 114642 / LMG 32736 / 3841) (Rhizobium leguminosarum bv. viciae).